Consider the following 216-residue polypeptide: Octanoyltransferase (216 aa).

Residues 30-204 enclose the BPL/LPL catalytic domain; sequence KNNINEIWLL…NCKKFLMMNN (175 aa). Substrate contacts are provided by residues 68-75, 135-137, and 148-150; these read RGGHMTFH, SIG, and GLA. Cysteine 166 functions as the Acyl-thioester intermediate in the catalytic mechanism.

It belongs to the LipB family.

The protein localises to the cytoplasm. The enzyme catalyses octanoyl-[ACP] + L-lysyl-[protein] = N(6)-octanoyl-L-lysyl-[protein] + holo-[ACP] + H(+). It participates in protein modification; protein lipoylation via endogenous pathway; protein N(6)-(lipoyl)lysine from octanoyl-[acyl-carrier-protein]: step 1/2. Catalyzes the transfer of endogenously produced octanoic acid from octanoyl-acyl-carrier-protein onto the lipoyl domains of lipoate-dependent enzymes. Lipoyl-ACP can also act as a substrate although octanoyl-ACP is likely to be the physiological substrate. This is Octanoyltransferase from Wigglesworthia glossinidia brevipalpis.